Here is a 553-residue protein sequence, read N- to C-terminus: CTP synthase (553 aa).

The tract at residues 1 to 277 (MPTEPETDYD…DQYVMEELDI (277 aa)) is amidoligase domain. Serine 26 lines the CTP pocket. Serine 26 is a binding site for UTP. Residues 27 to 32 (GLGKGI) and aspartate 84 contribute to the ATP site. Mg(2+)-binding residues include aspartate 84 and glutamate 152. CTP is bound by residues 159-161 (DIE), 198-203 (KTKPTQ), and lysine 234. UTP contacts are provided by residues 198 to 203 (KTKPTQ) and lysine 234. Valine 252 provides a ligand contact to ATP. In terms of domain architecture, Glutamine amidotransferase type-1 spans 307–544 (LVGKYDLEDA…LEAVLGDDPH (238 aa)). Position 364 (glycine 364) interacts with L-glutamine. The active-site Nucleophile; for glutamine hydrolysis is the cysteine 391. L-glutamine is bound by residues 392 to 395 (LGFQ), glutamate 415, and arginine 472. Active-site residues include histidine 517 and glutamate 519.

Belongs to the CTP synthase family. In terms of assembly, homotetramer.

The protein localises to the cytoplasm. It carries out the reaction UTP + L-glutamine + ATP + H2O = CTP + L-glutamate + ADP + phosphate + 2 H(+). The enzyme catalyses L-glutamine + H2O = L-glutamate + NH4(+). The catalysed reaction is UTP + NH4(+) + ATP = CTP + ADP + phosphate + 2 H(+). The protein operates within pyrimidine metabolism; CTP biosynthesis via de novo pathway; CTP from UDP: step 2/2. With respect to regulation, allosterically activated by GTP, when glutamine is the substrate; GTP has no effect on the reaction when ammonia is the substrate. The allosteric effector GTP functions by stabilizing the protein conformation that binds the tetrahedral intermediate(s) formed during glutamine hydrolysis. Inhibited by the product CTP, via allosteric rather than competitive inhibition. Inhibited by 6-diazo-5-oxo-l-norleucine (DON). Catalyzes the ATP-dependent amination of UTP to CTP with either L-glutamine or ammonia as the source of nitrogen. Regulates intracellular CTP levels through interactions with the four ribonucleotide triphosphates. This is CTP synthase from Haloarcula hispanica (strain ATCC 33960 / DSM 4426 / JCM 8911 / NBRC 102182 / NCIMB 2187 / VKM B-1755).